A 276-amino-acid chain; its full sequence is 4-deoxy-L-threo-5-hexosulose-uronate ketol-isomerase (276 aa).

Residues H194, H196, E201, and H243 each coordinate Zn(2+).

This sequence belongs to the KduI family. It depends on Zn(2+) as a cofactor.

The catalysed reaction is 5-dehydro-4-deoxy-D-glucuronate = 3-deoxy-D-glycero-2,5-hexodiulosonate. It participates in glycan metabolism; pectin degradation; 2-dehydro-3-deoxy-D-gluconate from pectin: step 4/5. Functionally, catalyzes the isomerization of 5-dehydro-4-deoxy-D-glucuronate to 3-deoxy-D-glycero-2,5-hexodiulosonate. The chain is 4-deoxy-L-threo-5-hexosulose-uronate ketol-isomerase from Caldicellulosiruptor bescii (strain ATCC BAA-1888 / DSM 6725 / KCTC 15123 / Z-1320) (Anaerocellum thermophilum).